Here is a 903-residue protein sequence, read N- to C-terminus: Protein translocase subunit SecA (903 aa).

ATP is bound by residues glutamine 87, glycine 105–threonine 109, and aspartate 513. Basic and acidic residues predominate over residues methionine 840–arginine 853. The tract at residues methionine 840 to asparagine 903 is disordered. Positions 887, 889, 898, and 899 each coordinate Zn(2+).

This sequence belongs to the SecA family. As to quaternary structure, monomer and homodimer. Part of the essential Sec protein translocation apparatus which comprises SecA, SecYEG and auxiliary proteins SecDF-YajC and YidC. It depends on Zn(2+) as a cofactor.

The protein resides in the cell inner membrane. Its subcellular location is the cytoplasm. The catalysed reaction is ATP + H2O + cellular proteinSide 1 = ADP + phosphate + cellular proteinSide 2.. Functionally, part of the Sec protein translocase complex. Interacts with the SecYEG preprotein conducting channel. Has a central role in coupling the hydrolysis of ATP to the transfer of proteins into and across the cell membrane, serving both as a receptor for the preprotein-SecB complex and as an ATP-driven molecular motor driving the stepwise translocation of polypeptide chains across the membrane. This chain is Protein translocase subunit SecA, found in Vibrio cholerae serotype O1 (strain M66-2).